Consider the following 437-residue polypeptide: Sodium/bile acid cotransporter 4 (437 aa).

Topologically, residues Met1–His103 are extracellular. Residues Asn6, Asn18, and Asn24 are each glycosylated (N-linked (GlcNAc...) asparagine). A disordered region spans residues Ala37–Pro82. The segment covering Gly51–Pro60 has biased composition (low complexity). The helical transmembrane segment at Gly104–Val124 threads the bilayer. Topologically, residues Asp125–Leu140 are cytoplasmic. A helical transmembrane segment spans residues Leu141 to Phe161. Over Lys162–Ser197 the chain is Extracellular. Residues Asn181 and Asn195 are each glycosylated (N-linked (GlcNAc...) asparagine). Residues Ile198 to Ile218 form a helical membrane-spanning segment. Residues Tyr219–Pro233 lie on the Cytoplasmic side of the membrane. A helical membrane pass occupies residues Leu234–Ile254. The Extracellular portion of the chain corresponds to Arg255–Lys267. A helical transmembrane segment spans residues Val268–Leu288. The Cytoplasmic portion of the chain corresponds to Gly289–Glu291. A helical membrane pass occupies residues Leu292–Tyr312. At Ala313–Met360 the chain is on the extracellular side. A helical transmembrane segment spans residues Tyr361–Ile381. Residues Tyr382 to Leu437 lie on the Cytoplasmic side of the membrane.

It belongs to the bile acid:sodium symporter (BASS) (TC 2.A.28) family. Activated following N-terminal proteolytic cleavage by thrombin and/or proteases. As to expression, highly expressed in brain and small intestine, and moderately expressed in colon, heart, prostate, and testis. Very low levels were detected in kidney, liver, ovary, placenta, spleen, and thymus.

The protein localises to the cell membrane. In terms of biological role, transporter for bile acids. This is Sodium/bile acid cotransporter 4 (SLC10A4) from Homo sapiens (Human).